The sequence spans 402 residues: 1-deoxy-D-xylulose 5-phosphate reductoisomerase (402 aa).

Threonine 13, glycine 14, serine 15, isoleucine 16, and asparagine 126 together coordinate NADPH. Residue lysine 127 participates in 1-deoxy-D-xylulose 5-phosphate binding. Residue glutamate 128 participates in NADPH binding. Aspartate 152 contacts Mn(2+). Serine 153, glutamate 154, serine 188, and histidine 211 together coordinate 1-deoxy-D-xylulose 5-phosphate. Mn(2+) is bound at residue glutamate 154. Glycine 217 provides a ligand contact to NADPH. 1-deoxy-D-xylulose 5-phosphate-binding residues include serine 224, asparagine 229, lysine 230, and glutamate 233. Glutamate 233 contributes to the Mn(2+) binding site.

Belongs to the DXR family. The cofactor is Mg(2+). Requires Mn(2+) as cofactor.

It catalyses the reaction 2-C-methyl-D-erythritol 4-phosphate + NADP(+) = 1-deoxy-D-xylulose 5-phosphate + NADPH + H(+). Its pathway is isoprenoid biosynthesis; isopentenyl diphosphate biosynthesis via DXP pathway; isopentenyl diphosphate from 1-deoxy-D-xylulose 5-phosphate: step 1/6. Functionally, catalyzes the NADPH-dependent rearrangement and reduction of 1-deoxy-D-xylulose-5-phosphate (DXP) to 2-C-methyl-D-erythritol 4-phosphate (MEP). This Psychrobacter cryohalolentis (strain ATCC BAA-1226 / DSM 17306 / VKM B-2378 / K5) protein is 1-deoxy-D-xylulose 5-phosphate reductoisomerase.